The primary structure comprises 398 residues: Elongation factor Tu (398 aa).

The tr-type G domain maps to 10–207; sequence KPHVNIGTIG…TVDEYIPEPE (198 aa). The interval 19–26 is G1; it reads GHVDHGKT. Residue 19-26 coordinates GTP; it reads GHVDHGKT. T26 lines the Mg(2+) pocket. Positions 63 to 67 are G2; that stretch reads GITIN. A G3 region spans residues 84-87; the sequence is DAPG. Residues 84–88 and 139–142 each bind GTP; these read DAPGH and NKVD. The segment at 139–142 is G4; it reads NKVD. The tract at residues 177–179 is G5; it reads SAL.

This sequence belongs to the TRAFAC class translation factor GTPase superfamily. Classic translation factor GTPase family. EF-Tu/EF-1A subfamily. Monomer.

The protein localises to the cytoplasm. It catalyses the reaction GTP + H2O = GDP + phosphate + H(+). In terms of biological role, GTP hydrolase that promotes the GTP-dependent binding of aminoacyl-tRNA to the A-site of ribosomes during protein biosynthesis. The protein is Elongation factor Tu of Streptococcus pyogenes serotype M49 (strain NZ131).